A 296-amino-acid polypeptide reads, in one-letter code: Protoheme IX farnesyltransferase (296 aa).

Topologically, residues 1-9 (MMFKQYLQV) are cytoplasmic. A helical transmembrane segment spans residues 10-28 (TKPGIIFGNLISVIGGFLL). Topologically, residues 29–37 (ASKGSIDYP) are periplasmic. A helical transmembrane segment spans residues 38–56 (LFIYTLVGVSLVVASGCVF). Residues 57–78 (NNYIDRDIDRKMERTKNRVLVK) are Cytoplasmic-facing. Residues 79–97 (GLISPAVSLVYATLLGIAG) traverse the membrane as a helical segment. Topologically, residues 98 to 107 (FMLLWFGANP) are periplasmic. The helical transmembrane segment at 108-126 (LACWLGVMGFVVYVGVYSL) threads the bilayer. Over 127 to 197 (YMKRHSVYGT…YQAANIPVLP (71 aa)) the chain is Cytoplasmic. A helical transmembrane segment spans residues 198 to 216 (VVKGISVAKNHITLYIIAF). Residues 217 to 228 (AVATLMLSLGGY) lie on the Periplasmic side of the membrane. The helical transmembrane segment at 229–247 (AGYKYLVVAAAVSVWWLGM) threads the bilayer. Residues 248-268 (ALRGYKVADDRIWARKLFGFS) are Cytoplasmic-facing. Residues 269–287 (IIAITALSVMMSVDFMVPD) traverse the membrane as a helical segment. Residues 288–296 (SHTLLAAVW) lie on the Periplasmic side of the membrane.

The protein belongs to the UbiA prenyltransferase family. Protoheme IX farnesyltransferase subfamily.

Its subcellular location is the cell inner membrane. The catalysed reaction is heme b + (2E,6E)-farnesyl diphosphate + H2O = Fe(II)-heme o + diphosphate. It participates in porphyrin-containing compound metabolism; heme O biosynthesis; heme O from protoheme: step 1/1. Converts heme B (protoheme IX) to heme O by substitution of the vinyl group on carbon 2 of heme B porphyrin ring with a hydroxyethyl farnesyl side group. The protein is Protoheme IX farnesyltransferase of Shigella flexneri.